The following is a 278-amino-acid chain: 4-deoxy-L-threo-5-hexosulose-uronate ketol-isomerase (278 aa).

Zn(2+) is bound by residues H196, H198, E203, and H245.

It belongs to the KduI family. Zn(2+) serves as cofactor.

It catalyses the reaction 5-dehydro-4-deoxy-D-glucuronate = 3-deoxy-D-glycero-2,5-hexodiulosonate. It functions in the pathway glycan metabolism; pectin degradation; 2-dehydro-3-deoxy-D-gluconate from pectin: step 4/5. Catalyzes the isomerization of 5-dehydro-4-deoxy-D-glucuronate to 3-deoxy-D-glycero-2,5-hexodiulosonate. This chain is 4-deoxy-L-threo-5-hexosulose-uronate ketol-isomerase, found in Yersinia enterocolitica serotype O:8 / biotype 1B (strain NCTC 13174 / 8081).